Here is a 352-residue protein sequence, read N- to C-terminus: UDP-N-acetylglucosamine--N-acetylmuramyl-(pentapeptide) pyrophosphoryl-undecaprenol N-acetylglucosamine transferase (352 aa).

Residues 12 to 14 (TGG), asparagine 124, arginine 160, serine 188, and glutamine 287 each bind UDP-N-acetyl-alpha-D-glucosamine.

This sequence belongs to the glycosyltransferase 28 family. MurG subfamily.

Its subcellular location is the cell inner membrane. The catalysed reaction is di-trans,octa-cis-undecaprenyl diphospho-N-acetyl-alpha-D-muramoyl-L-alanyl-D-glutamyl-meso-2,6-diaminopimeloyl-D-alanyl-D-alanine + UDP-N-acetyl-alpha-D-glucosamine = di-trans,octa-cis-undecaprenyl diphospho-[N-acetyl-alpha-D-glucosaminyl-(1-&gt;4)]-N-acetyl-alpha-D-muramoyl-L-alanyl-D-glutamyl-meso-2,6-diaminopimeloyl-D-alanyl-D-alanine + UDP + H(+). The protein operates within cell wall biogenesis; peptidoglycan biosynthesis. Cell wall formation. Catalyzes the transfer of a GlcNAc subunit on undecaprenyl-pyrophosphoryl-MurNAc-pentapeptide (lipid intermediate I) to form undecaprenyl-pyrophosphoryl-MurNAc-(pentapeptide)GlcNAc (lipid intermediate II). This Dechloromonas aromatica (strain RCB) protein is UDP-N-acetylglucosamine--N-acetylmuramyl-(pentapeptide) pyrophosphoryl-undecaprenol N-acetylglucosamine transferase.